Reading from the N-terminus, the 638-residue chain is Chaperone protein DnaK (638 aa).

Thr-197 carries the post-translational modification Phosphothreonine; by autocatalysis. The disordered stretch occupies residues Gln-598 to Lys-638. Residues Ser-615–Arg-624 show a composition bias toward gly residues. Residues Asp-628 to Lys-638 show a composition bias toward acidic residues.

The protein belongs to the heat shock protein 70 family.

Functionally, acts as a chaperone. This Gloeobacter violaceus (strain ATCC 29082 / PCC 7421) protein is Chaperone protein DnaK.